We begin with the raw amino-acid sequence, 426 residues long: Gamma-glutamyl phosphate reductase (426 aa).

Belongs to the gamma-glutamyl phosphate reductase family.

The protein resides in the cytoplasm. The catalysed reaction is L-glutamate 5-semialdehyde + phosphate + NADP(+) = L-glutamyl 5-phosphate + NADPH + H(+). The protein operates within amino-acid biosynthesis; L-proline biosynthesis; L-glutamate 5-semialdehyde from L-glutamate: step 2/2. In terms of biological role, catalyzes the NADPH-dependent reduction of L-glutamate 5-phosphate into L-glutamate 5-semialdehyde and phosphate. The product spontaneously undergoes cyclization to form 1-pyrroline-5-carboxylate. This chain is Gamma-glutamyl phosphate reductase, found in Cupriavidus pinatubonensis (strain JMP 134 / LMG 1197) (Cupriavidus necator (strain JMP 134)).